Here is a 321-residue protein sequence, read N- to C-terminus: Probable DNA polymerase III subunit delta (321 aa).

It belongs to the DNA polymerase HolA subunit family. As to quaternary structure, component of the DNA clamp loading complex consisting of tau(3):delta(1):delta'(1). The DNA polymerase III holoenzyme complex contains at least 10 different subunits organized into 3 functionally essential subassemblies: the Pol III core, the beta sliding clamp processivity factor and the clamp-loading complex. The Pol III core (subunits alpha, epsilon and theta) contains the polymerase and the 3'-5' exonuclease proofreading activities. The polymerase is tethered to the template via the dimeric beta sliding clamp processivity factor. The DNA clamp-loading complex assembles the beta sliding clamp onto the primed template and plays a central role in the organization and communication at the replication fork.

It catalyses the reaction DNA(n) + a 2'-deoxyribonucleoside 5'-triphosphate = DNA(n+1) + diphosphate. Functionally, part of the beta sliding clamp loading complex, which hydrolyzes ATP to load the beta clamp onto primed DNA to form the DNA replication pre-initiation complex. DNA polymerase III is a complex, multichain enzyme responsible for most of the replicative synthesis in bacteria. This DNA polymerase also exhibits 3'-5' exonuclease activity. The delta subunit is the wrench that will open the beta subunit dimer. The DNA clamp loading complex (tau(3),delta,delta') is thought to load beta dimers onto DNA by binding ATP which alters the complex's conformation so it can bind beta sliding clamp dimers and open them at one interface. Primed DNA is recognized, ATP is hydrolyzed releasing the clamp loading complex and closing the beta sliding clamp ring around the primed DNA. This Rickettsia prowazekii (strain Madrid E) protein is Probable DNA polymerase III subunit delta.